Consider the following 206-residue polypeptide: Small ribosomal subunit protein uS4 (206 aa).

One can recognise an S4 RNA-binding domain in the interval 96-156; sequence CRLDNVVYRM…EKAKNQLRIV (61 aa).

It belongs to the universal ribosomal protein uS4 family. In terms of assembly, part of the 30S ribosomal subunit. Contacts protein S5. The interaction surface between S4 and S5 is involved in control of translational fidelity.

In terms of biological role, one of the primary rRNA binding proteins, it binds directly to 16S rRNA where it nucleates assembly of the body of the 30S subunit. Its function is as follows. With S5 and S12 plays an important role in translational accuracy. The protein is Small ribosomal subunit protein uS4 of Pseudomonas savastanoi pv. phaseolicola (strain 1448A / Race 6) (Pseudomonas syringae pv. phaseolicola (strain 1448A / Race 6)).